We begin with the raw amino-acid sequence, 372 residues long: MANLFPALRTPLYNLITEQTTKLTTFGGWEMPVQFAGLKQEHQAVREKVGMFDISHMGKFVLTGQKVLAALQSLVPSDLDRLTPGKAQYTVLLNAQGGIIDDIIVYDQGKNPEGQERVTLIVNAATTVKDKQWLLEHLPEEIDFQDLSREKVLIALQGPEALTILQPLVDQNLGELPAFGHLEAEFLREKAFIARTGYTGEDGFEIMVSPEVGKQLWQTFGSKGVTPCGLGARDTLRLEAGMGLYGQDMNDETTPLEAGLGWLVHLDSKGDFIGRAVLTEQKANGVEKRLVGLEMLAKQIARHDYPILHNGEIMGIVTSGTLSPTLQKAIALGYVPTELAKVGQELEVEVRGKTYGIKVVKKLFYRSEQKPR.

It belongs to the GcvT family. In terms of assembly, the glycine cleavage system is composed of four proteins: P, T, L and H.

It catalyses the reaction N(6)-[(R)-S(8)-aminomethyldihydrolipoyl]-L-lysyl-[protein] + (6S)-5,6,7,8-tetrahydrofolate = N(6)-[(R)-dihydrolipoyl]-L-lysyl-[protein] + (6R)-5,10-methylene-5,6,7,8-tetrahydrofolate + NH4(+). Its function is as follows. The glycine cleavage system catalyzes the degradation of glycine. This Synechocystis sp. (strain ATCC 27184 / PCC 6803 / Kazusa) protein is Aminomethyltransferase.